Reading from the N-terminus, the 89-residue chain is uncharacterized protein (89 aa).

This is an uncharacterized protein from Mycobacterium bovis (strain ATCC BAA-935 / AF2122/97).